Here is a 537-residue protein sequence, read N- to C-terminus: Extracellular exo-inulinase inuE (537 aa).

The signal sequence occupies residues 1–19; the sequence is MARLLKAVTVCALAGIAHA. Asp-41 is a catalytic residue. N-linked (GlcNAc...) asparagine glycans are attached at residues Asn-49, Asn-67, Asn-112, Asn-300, Asn-363, Asn-398, Asn-430, and Asn-531.

Belongs to the glycosyl hydrolase 32 family.

Its subcellular location is the secreted. The catalysed reaction is Hydrolysis of terminal, non-reducing (2-&gt;1)- and (2-&gt;6)-linked beta-D-fructofuranose residues in fructans.. With respect to regulation, the catalytic activity is increased by manganese cathions, but strongly inhibited by other metal ions such as copper, aluminum, silver, iron, nickel, zinc and magnesium cathions. Its function is as follows. Exo-inulinase involved in utilization of the plant storage polymer inulin, consisting of fructooligosaccharides with a degree of polymerization (DP) value from 2 to 60. Splits off terminal fructose units successively from the non-reducing end of the inulin molecule, and also hydrolyze sucrose and raffinose. The polypeptide is Extracellular exo-inulinase inuE (exoI) (Aspergillus ficuum).